The following is a 385-amino-acid chain: Glucans biosynthesis protein C (385 aa).

The next 10 helical transmembrane spans lie at 17–37 (AWLM…SHTW), 60–80 (MQVF…RYPL), 91–111 (VGIP…IMLQ), 137–157 (ISHL…VWIF), 173–193 (KFSM…YAVI), 212–232 (FIVM…LAFI), 245–262 (RGST…LLNQ), 274–294 (TESV…FSFG), 311–331 (ASLF…AYIT), and 338–358 (WLGF…LYEI).

Belongs to the acyltransferase 3 family. OpgC subfamily.

Its subcellular location is the cell membrane. It participates in glycan metabolism; osmoregulated periplasmic glucan (OPG) biosynthesis. Necessary for the succinyl substitution of periplasmic glucans. Could catalyze the transfer of succinyl residues from the cytoplasmic side of the membrane to the nascent glucan backbones on the periplasmic side of the membrane. This chain is Glucans biosynthesis protein C, found in Escherichia coli O81 (strain ED1a).